The primary structure comprises 358 residues: 3-isopropylmalate dehydrogenase (358 aa).

R92, R102, R130, and D224 together coordinate substrate. 3 residues coordinate Mg(2+): D224, D248, and D252. 282–294 (GSAPDIAGQGIAN) is an NAD(+) binding site.

Belongs to the isocitrate and isopropylmalate dehydrogenases family. LeuB type 1 subfamily. In terms of assembly, homodimer. Mg(2+) serves as cofactor. Mn(2+) is required as a cofactor.

The protein localises to the cytoplasm. It carries out the reaction (2R,3S)-3-isopropylmalate + NAD(+) = 4-methyl-2-oxopentanoate + CO2 + NADH. It functions in the pathway amino-acid biosynthesis; L-leucine biosynthesis; L-leucine from 3-methyl-2-oxobutanoate: step 3/4. In terms of biological role, catalyzes the oxidation of 3-carboxy-2-hydroxy-4-methylpentanoate (3-isopropylmalate) to 3-carboxy-4-methyl-2-oxopentanoate. The product decarboxylates to 4-methyl-2 oxopentanoate. This is 3-isopropylmalate dehydrogenase from Bordetella pertussis (strain Tohama I / ATCC BAA-589 / NCTC 13251).